A 266-amino-acid polypeptide reads, in one-letter code: Adaptin ear-binding coat-associated protein 2 (266 aa).

Disordered regions lie at residues 164–191 and 244–266; these read SMKKKDGAAGTPRARPTSTGGLSLLPPP and GDFTKSTGSTSSQTQPGAGWVQF. Ser181 is modified (phosphoserine). A WXXF motif 1 motif is present at residues 243–246; that stretch reads WGDF. A compositionally biased stretch (low complexity) spans 247–258; sequence TKSTGSTSSQTQ. The short motif at 263–266 is the WXXF motif 2 element; the sequence is WVQF.

The protein belongs to the NECAP family. Interacts with AP1G1 and AP2A1 components of the adapter protein complexes AP-1 and AP-2. Interacts with the GAE domain proteins GGA1, GGA2 and GGA3.

It localises to the cytoplasmic vesicle. Its subcellular location is the clathrin-coated vesicle membrane. The protein resides in the cell membrane. Functionally, involved in endocytosis. This is Adaptin ear-binding coat-associated protein 2 (NECAP2) from Bos taurus (Bovine).